The primary structure comprises 194 residues: Putative manganese efflux pump MntP (194 aa).

6 helical membrane-spanning segments follow: residues 3-23 (PITILLIGIAMSTDAFAAAIG), 37-57 (LYVAVIFGVIETATPIAGWLL), 65-85 (IAAFDHWIAFGLLSGLGIHMI), 112-132 (LAATALATSIDAAAIGISLAF), 137-157 (IGIVAAVIGLCTFTMVIFGVM), and 170-190 (AEIVGGIILIIVGSTILYEHL).

Belongs to the MntP (TC 9.B.29) family.

The protein resides in the cell inner membrane. Functionally, probably functions as a manganese efflux pump. This Xylella fastidiosa (strain M12) protein is Putative manganese efflux pump MntP.